The sequence spans 312 residues: Malate dehydrogenase (312 aa).

Residues 12-17 (GAGFTG) and D36 contribute to the NAD(+) site. Substrate contacts are provided by R87 and R93. NAD(+) is bound by residues N100 and 123–125 (LTN). N125 is a substrate binding site. S149 carries the post-translational modification Phosphoserine. Position 156 (R156) interacts with substrate. H180 acts as the Proton acceptor in catalysis.

This sequence belongs to the LDH/MDH superfamily. MDH type 3 family.

The catalysed reaction is (S)-malate + NAD(+) = oxaloacetate + NADH + H(+). Functionally, catalyzes the reversible oxidation of malate to oxaloacetate. This chain is Malate dehydrogenase, found in Bacillus cereus (strain ATCC 14579 / DSM 31 / CCUG 7414 / JCM 2152 / NBRC 15305 / NCIMB 9373 / NCTC 2599 / NRRL B-3711).